The chain runs to 273 residues: Ribosomal RNA small subunit methyltransferase A (273 aa).

S-adenosyl-L-methionine-binding residues include Asn18, Leu20, Gly45, Glu66, Asp91, and Asn113.

The protein belongs to the class I-like SAM-binding methyltransferase superfamily. rRNA adenine N(6)-methyltransferase family. RsmA subfamily.

The protein localises to the cytoplasm. The catalysed reaction is adenosine(1518)/adenosine(1519) in 16S rRNA + 4 S-adenosyl-L-methionine = N(6)-dimethyladenosine(1518)/N(6)-dimethyladenosine(1519) in 16S rRNA + 4 S-adenosyl-L-homocysteine + 4 H(+). Its function is as follows. Specifically dimethylates two adjacent adenosines (A1518 and A1519) in the loop of a conserved hairpin near the 3'-end of 16S rRNA in the 30S particle. May play a critical role in biogenesis of 30S subunits. The chain is Ribosomal RNA small subunit methyltransferase A from Shigella flexneri.